We begin with the raw amino-acid sequence, 307 residues long: Major immediate early protein (307 aa).

Residues 39–92 (CAVCLETYCVQSNNIIDFLMPSECTHLFCYKCVLNMYKNAMNVPRAAVSCPMCN) form an RING-type zinc finger.

The polypeptide is Major immediate early protein (PE38) (Orgyia pseudotsugata multicapsid polyhedrosis virus (OpMNPV)).